The primary structure comprises 399 residues: Acetate kinase (399 aa).

Asparagine 10 provides a ligand contact to Mg(2+). An ATP-binding site is contributed by lysine 17. Arginine 91 serves as a coordination point for substrate. Residue aspartate 148 is the Proton donor/acceptor of the active site. Residues 208–212 (HLGNG), 283–285 (DCR), and 331–335 (GIGEN) contribute to the ATP site. Glutamate 385 contributes to the Mg(2+) binding site.

Belongs to the acetokinase family. Homodimer. The cofactor is Mg(2+). Mn(2+) is required as a cofactor.

It localises to the cytoplasm. The catalysed reaction is acetate + ATP = acetyl phosphate + ADP. It participates in metabolic intermediate biosynthesis; acetyl-CoA biosynthesis; acetyl-CoA from acetate: step 1/2. Catalyzes the formation of acetyl phosphate from acetate and ATP. Can also catalyze the reverse reaction. This is Acetate kinase from Shewanella baltica (strain OS223).